Reading from the N-terminus, the 54-residue chain is Potassium channel toxin alpha-KTx 14.5 (54 aa).

An N-terminal signal peptide occupies residues 1–23 (MKIFFAILLILAVCSMAIWTVNG). 3 disulfides stabilise this stretch: cysteine 30-cysteine 46, cysteine 36-cysteine 51, and cysteine 40-cysteine 53.

The protein belongs to the short scorpion toxin superfamily. Potassium channel inhibitor family. Alpha-KTx 14 subfamily. In terms of tissue distribution, expressed by the venom gland.

The protein localises to the secreted. Its function is as follows. Inhibits potassium channels. May be active towards small conductance calcium-activated potassium channels (KCNN, SK), and less active towards voltage-gated potassium channels (Kv/KCN). The polypeptide is Potassium channel toxin alpha-KTx 14.5 (Mesobuthus gibbosus (Mediterranean checkered scorpion)).